We begin with the raw amino-acid sequence, 223 residues long: Ion-translocating oxidoreductase complex subunit E (223 aa).

The next 6 helical transmembrane spans lie at 17-37 (NGVL…GTAT), 40-60 (LGMG…VAMF), 70-90 (IPVY…GMNA), 94-114 (ELYK…LPLA), 129-149 (FLDG…IGAV), and 182-202 (WGIL…LMVV).

It belongs to the NqrDE/RnfAE family. The complex is composed of six subunits: RnfA, RnfB, RnfC, RnfD, RnfE and RnfG.

The protein localises to the cell inner membrane. Its function is as follows. Part of a membrane-bound complex that couples electron transfer with translocation of ions across the membrane. The sequence is that of Ion-translocating oxidoreductase complex subunit E from Paramagnetospirillum magneticum (strain ATCC 700264 / AMB-1) (Magnetospirillum magneticum).